The following is a 1687-amino-acid chain: Muscle calcium channel subunit alpha-1 (1687 aa).

The interval 1–33 (MDDAVCPTETDNVQNKQKATTPKRTQRRGGKQQ) is disordered. Over 1-61 (MDDAVCPTET…IFCIKIVDSK (61 aa)) the chain is Cytoplasmic. The span at 9 to 23 (ETDNVQNKQKATTPK) shows a compositional bias: polar residues. An I repeat occupies 48–330 (NPLRIFCIKI…LILGVLSGEF (283 aa)). Residues 62-80 (LFEYFILLTIFANCVALAV) form a helical membrane-spanning segment. Over 81-99 (YTPYPSGDSNITNQMLEKI) the chain is Extracellular. N-linked (GlcNAc...) asparagine glycosylation occurs at asparagine 90. A helical transmembrane segment spans residues 100 to 117 (EYIFLVIFTSECVMKIIA). Residues 118-130 (YGFVLHTGSYLRN) are Cytoplasmic-facing. The helical transmembrane segment at 131–145 (GWNFLDFFIVVIGMI) threads the bilayer. At 146-157 (STALSNLVKEGF) the chain is on the extracellular side. The helical transmembrane segment at 158-176 (DVKALRAFRVLRPLRLVSG) threads the bilayer. The Cytoplasmic portion of the chain corresponds to 177–196 (VPSLQVVLNSILKAMIPLLH). The chain crosses the membrane as a helical span at residues 197-216 (IALLVLFVIIIYAIIGLELF). At 217-302 (SGKLHKTCRH…SIQDAMGSSW (86 aa)) the chain is on the extracellular side. Glutamate 285 is a Ca(2+) binding site. Residues 303–327 (EWIYFVSMVILGAFFVMNLILGVLS) traverse the membrane as a helical segment. The Cytoplasmic portion of the chain corresponds to 328-434 (GEFSKERTKA…RACRKAVKSQ (107 aa)). The stretch at 420-667 (NRRIRRACRK…VFLAIAVDNL (248 aa)) is one II repeat. A helical transmembrane segment spans residues 435-454 (AFYWLIILLVFLNTGVLATE). Residues 455-467 (HYRQPIWLDQFQE) lie on the Extracellular side of the membrane. A helical membrane pass occupies residues 468–487 (YTNIFFIALFTCEMILKMYS). At 488 to 496 (LGFQGYFVS) the chain is on the cytoplasmic side. The helical transmembrane segment at 497–515 (LFNRFDCFVVIGSISEMVL) threads the bilayer. Residues 516–525 (TSSELMAPLG) are Extracellular-facing. The helical transmembrane segment at 526–544 (VSVLRCVRLLRVFKVTKYW) threads the bilayer. At 545–563 (HSLSNLVASLLNSIQSIAS) the chain is on the cytoplasmic side. Residues 564–583 (LLLLLFLFIVIFGLLGMQVF) form a helical membrane-spanning segment. Residues 584-639 (GGRFTFKPEEEKPRSNFDSFYQSLLTVFQILTGEDWNVVMYDGIRAYGGVFSFGIV) lie on the Extracellular side of the membrane. Glutamate 617 provides a ligand contact to Ca(2+). The helical transmembrane segment at 640-664 (ACIYYIILFICGNYILLNVFLAIAV) threads the bilayer. At 665–785 (DNLADADSLS…TNRFRIFCHR (121 aa)) the chain is on the cytoplasmic side. The stretch at 777 to 1059 (NRFRIFCHRL…IFVGFVIVTF (283 aa)) is one III repeat. A helical transmembrane segment spans residues 786-809 (LCNHSNFGNFILCCIMFSSAMLAA). Residues 810–826 (ENPLKADASRNIVLNKF) are Extracellular-facing. A helical transmembrane segment spans residues 827-846 (DYFFTAVFTIELVLKLISYG). Residues 847–854 (FVLHDGAF) lie on the Cytoplasmic side of the membrane. The chain crosses the membrane as a helical span at residues 855 to 877 (CRSAFNLLDLLVVCVSLISIFFN). Residues 878–885 (SNAISVVK) are Extracellular-facing. Residues 886 to 900 (ILRVLRVLRPLRAIN) form a helical membrane-spanning segment. Residues 901–921 (RAKGLKHVVQCVIVAVKTIGN) are Cytoplasmic-facing. The chain crosses the membrane as a helical span at residues 922–941 (IVLVTCLLQFMFAVIGVQLF). Residues 942–1030 (KGKFFSCSDG…NGGPIYNFRP (89 aa)) are Extracellular-facing. Residues 979–1068 (REWKNNKFHF…FQNEGEQEYK (90 aa)) form a dihydropyridine binding region. Glutamate 1005 serves as a coordination point for Ca(2+). The chain crosses the membrane as a helical span at residues 1031 to 1055 (IVAAYYIIYIIIIAFFMVNIFVGFV). Residues 1056 to 1110 (IVTFQNEGEQEYKNCELDKNQRNCIEFALKAKPVRRYIPKHSIQYKVWWFVTSSS) lie on the Cytoplasmic side of the membrane. An IV repeat occupies 1096–1370 (HSIQYKVWWF…LFVAVIMDNF (275 aa)). Residues 1111–1129 (FEYSIFVLIMINTVTLAMK) traverse the membrane as a helical segment. Over 1130–1143 (FYKQPEYYSEILDA) the chain is Extracellular. Residues 1144–1163 (LNMIFTAVFSLEFIFKLAAF) traverse the membrane as a helical segment. The Cytoplasmic segment spans residues 1164–1172 (RFKNYFGDA). Residues 1173–1191 (WNTFDFIIVLGSFIDIVYS) traverse the membrane as a helical segment. Residues 1192–1219 (EIKTKEQALATCDGQSCNKAKGGSTLIS) are Extracellular-facing. Residues 1220 to 1238 (INFFRLFRVMRLVKLLSKG) traverse the membrane as a helical segment. Residues 1239–1257 (EGIRTLLWTFIKSFQALPY) lie on the Cytoplasmic side of the membrane. A helical transmembrane segment spans residues 1258–1277 (VALLIVMLFFIYAVIGMQVF). At 1278–1343 (GKIMLEEGTS…AVNNCGSSIA (66 aa)) the chain is on the extracellular side. The segment at 1327–1389 (KCDPESDAVN…LGPHHLDEFI (63 aa)) is dihydropyridine binding. Residues 1337–1378 (NCGSSIAFPYFISFYVLCSFLIINLFVAVIMDNFDYLTRDWS) are phenylalkylamine binding. Residues 1344–1362 (FPYFISFYVLCSFLIINLF) form a helical membrane-spanning segment. Over 1363-1687 (VAVIMDNFDY…PKSKDKDEEF (325 aa)) the chain is Cytoplasmic.

Belongs to the calcium channel alpha-1 subunit (TC 1.A.1.11) family. Predominantly expressed in the larval body wall musculature. In adults, highest expression in thorax followed by head and at a lower extent by abdomen.

It is found in the membrane. In terms of biological role, voltage-sensitive calcium channels (VSCC) mediate the entry of calcium ions into excitable cells and are also involved in a variety of calcium-dependent processes, including muscle contraction, hormone or neurotransmitter release, gene expression, cell motility, cell division and cell death. MDL-alpha1 encodes a dihydropyridine- and diltiazem-sensitive current in larval body wall muscle. The polypeptide is Muscle calcium channel subunit alpha-1 (Musca domestica (House fly)).